The sequence spans 345 residues: Heat-inducible transcription repressor HrcA (345 aa).

Belongs to the HrcA family.

Functionally, negative regulator of class I heat shock genes (grpE-dnaK-dnaJ and groELS operons). Prevents heat-shock induction of these operons. The sequence is that of Heat-inducible transcription repressor HrcA from Listeria welshimeri serovar 6b (strain ATCC 35897 / DSM 20650 / CCUG 15529 / CIP 8149 / NCTC 11857 / SLCC 5334 / V8).